The chain runs to 89 residues: Dynein light chain 2, cytoplasmic (89 aa).

The protein belongs to the dynein light chain family.

Its subcellular location is the cytoplasm. It localises to the cytoskeleton. In terms of biological role, acts as a non-catalytic accessory component of a dynein complex. The protein is Dynein light chain 2, cytoplasmic (Cdlc2) of Drosophila melanogaster (Fruit fly).